Reading from the N-terminus, the 720-residue chain is MALTTFSISRGGFVGALPQEGHFAPAAAELSLHKLQSRPHKARRRSSSSISASLSTEREAAEYHSQRPPTPLLDTVNYPIHMKNLSLKELQQLADELRSDVIFHVSKTGGHLGSSLGVVELTVALHYVFNTPQDKILWDVGHQSYPHKILTGRRDKMPTMRQTNGLSGFTKRSESEYDSFGTGHSSTTISAALGMAVGRDLKGGKNNVVAVIGDGAMTAGQAYEAMNNAGYLDSDMIVILNDNKQVSLPTATLDGPAPPVGALSSALSKLQSSRPLRELREVAKGVTKQIGGSVHELAAKVDEYARGMISGSGSTLFEELGLYYIGPVDGHNIDDLITILREVKSTKTTGPVLIHVVTEKGRGYPYAERAADKYHGVAKFDPATGKQFKSPAKTLSYTNYFAEALIAEAEQDNRVVAIHAAMGGGTGLNYFLRRFPNRCFDVGIAEQHAVTFAAGLACEGLKPFCAIYSSFLQRGYDQVVHDVDLQKLPVRFAMDRAGLVGADGPTHCGAFDVTYMACLPNMVVMAPSDEAELCHMVATAAAIDDRPSCFRYPRGNGIGVPLPPNYKGVPLEVGKGRVLLEGERVALLGYGSAVQYCLAAASLVERHGLKVTVADARFCKPLDQTLIRRLASSHEVLLTVEEGSIGGFGSHVAQFMALDGLLDGKLKWRPLVLPDRYIDHGSPADQLAEAGLTPSHIAATVFNVLGQAREALAIMTVPNA.

Residues Met1 to Ser51 constitute a chloroplast transit peptide. Positions Leu35–Ser46 are enriched in basic residues. The tract at residues Leu35–Asp74 is disordered. Basic and acidic residues predominate over residues Thr56–Ser65. Residues His142 and Gly183 to Ser185 each bind thiamine diphosphate. Asp214 lines the Mg(2+) pocket. Thiamine diphosphate contacts are provided by residues Gly215 to Ala216, Asn243, Tyr364, and Glu446. Asn243 provides a ligand contact to Mg(2+).

The protein belongs to the transketolase family. DXPS subfamily. In terms of assembly, homodimer. Mg(2+) serves as cofactor. Thiamine diphosphate is required as a cofactor.

Its subcellular location is the plastid. The protein localises to the chloroplast stroma. It catalyses the reaction D-glyceraldehyde 3-phosphate + pyruvate + H(+) = 1-deoxy-D-xylulose 5-phosphate + CO2. It participates in metabolic intermediate biosynthesis; 1-deoxy-D-xylulose 5-phosphate biosynthesis; 1-deoxy-D-xylulose 5-phosphate from D-glyceraldehyde 3-phosphate and pyruvate: step 1/1. In terms of biological role, catalyzes the acyloin condensation reaction between C atoms 2 and 3 of pyruvate and glyceraldehyde 3-phosphate to yield 1-deoxy-D-xylulose-5-phosphate (DXP). Is a limiting enzyme for plastidic isoprenoid biosynthesis and essential for chloroplast development. This chain is 1-deoxy-D-xylulose-5-phosphate synthase 1, chloroplastic (CLA1), found in Oryza sativa subsp. japonica (Rice).